Reading from the N-terminus, the 455-residue chain is Bifunctional protein GlmU (455 aa).

The interval 1–229 (MLNSAMSVVI…ISETEGVNNR (229 aa)) is pyrophosphorylase. UDP-N-acetyl-alpha-D-glucosamine-binding positions include 11–14 (LAAG), Lys-25, Gln-76, 81–82 (GT), 103–105 (YGD), Gly-140, Glu-154, Asn-169, and Asn-227. Asp-105 serves as a coordination point for Mg(2+). Asn-227 serves as a coordination point for Mg(2+). A linker region spans residues 230–250 (LQLSRLERIYQAEQAEKLLLA). Positions 251 to 455 (GVMLRDPARF…KQGWQRPVKK (205 aa)) are N-acetyltransferase. Arg-333 and Lys-351 together coordinate UDP-N-acetyl-alpha-D-glucosamine. The active-site Proton acceptor is the His-363. Tyr-366 and Asn-377 together coordinate UDP-N-acetyl-alpha-D-glucosamine. Acetyl-CoA contacts are provided by residues Ala-380, 386-387 (NY), Ser-405, Ala-423, and Arg-440.

The protein in the N-terminal section; belongs to the N-acetylglucosamine-1-phosphate uridyltransferase family. It in the C-terminal section; belongs to the transferase hexapeptide repeat family. In terms of assembly, homotrimer. Mg(2+) is required as a cofactor.

The protein localises to the cytoplasm. It carries out the reaction alpha-D-glucosamine 1-phosphate + acetyl-CoA = N-acetyl-alpha-D-glucosamine 1-phosphate + CoA + H(+). The enzyme catalyses N-acetyl-alpha-D-glucosamine 1-phosphate + UTP + H(+) = UDP-N-acetyl-alpha-D-glucosamine + diphosphate. Its pathway is nucleotide-sugar biosynthesis; UDP-N-acetyl-alpha-D-glucosamine biosynthesis; N-acetyl-alpha-D-glucosamine 1-phosphate from alpha-D-glucosamine 6-phosphate (route II): step 2/2. It functions in the pathway nucleotide-sugar biosynthesis; UDP-N-acetyl-alpha-D-glucosamine biosynthesis; UDP-N-acetyl-alpha-D-glucosamine from N-acetyl-alpha-D-glucosamine 1-phosphate: step 1/1. It participates in bacterial outer membrane biogenesis; LPS lipid A biosynthesis. Its function is as follows. Catalyzes the last two sequential reactions in the de novo biosynthetic pathway for UDP-N-acetylglucosamine (UDP-GlcNAc). The C-terminal domain catalyzes the transfer of acetyl group from acetyl coenzyme A to glucosamine-1-phosphate (GlcN-1-P) to produce N-acetylglucosamine-1-phosphate (GlcNAc-1-P), which is converted into UDP-GlcNAc by the transfer of uridine 5-monophosphate (from uridine 5-triphosphate), a reaction catalyzed by the N-terminal domain. The sequence is that of Bifunctional protein GlmU from Salmonella arizonae (strain ATCC BAA-731 / CDC346-86 / RSK2980).